Reading from the N-terminus, the 2090-residue chain is Non-reducing polyketide synthase rdc1 (2090 aa).

Positions Phe-12–His-250 are N-terminal acylcarrier protein transacylase (SAT) domain. Residues Thr-375–Asp-808 form the Ketosynthase family 3 (KS3) domain. Catalysis depends on for beta-ketoacyl synthase activity residues Cys-551, His-686, and His-726. The tract at residues Ile-912 to Ala-1195 is malonyl-CoA:ACP transacylase (MAT) domain. Ser-1003 serves as the catalytic For acyl/malonyl transferase activity. An N-terminal hotdog fold region spans residues Gln-1293–Leu-1433. Residues Gln-1293–Gln-1607 form the PKS/mFAS DH domain. Positions Gly-1304 to Ala-1604 are product template (PT) domain. The C-terminal hotdog fold stretch occupies residues Gln-1459–Gln-1607. Residues Ser-1615 to Asp-1650 are disordered. Residues Arg-1638–Val-1649 are compositionally biased toward basic and acidic residues. The Carrier domain occupies Val-1649–Thr-1726. Ser-1686 is subject to O-(pantetheine 4'-phosphoryl)serine. The thioesterase (TE) domain stretch occupies residues Ala-1820–Ala-1964.

The protein operates within secondary metabolite biosynthesis. In terms of biological role, non-reducing polyketide synthase; part of the gene cluster that mediates the biosynthesis of radicicol, a resorcylic acid lactone (RAL) that irreversibly inhibits the HSP90 molecular chaperone, an important target for cancer chemotherapy. The radicicol cluster encodes only two apparent post-PKS enzymes, a cytochrome P450 monooxygenase (rdc4) and a non-heme halogenase (rdc2) that could introduce the epoxide and the chlorine, respectively. If this cluster includes all the genes required for radicicol biosynthesis, the remaining structural features of radicicol are presumably generated by the PKSs rdc1 and rdc5. The C-2' ketone could arise if the R-PKS rdc5 and NR-PKS rdc1 each carry out four iterations, in contrast to the five iteration-three iteration split for the hypothemycin PKSs. The origin of the cis 5',6' double bond is not known. The radicicol R-PKS rdc5 ER domain may catalyze either double bond isomerization or reduction in the third iteration. The chain is Non-reducing polyketide synthase rdc1 from Metacordyceps chlamydosporia (Nematophagous fungus).